The primary structure comprises 122 residues: NADH-quinone oxidoreductase subunit A (122 aa).

The next 3 helical transmembrane spans lie at 10 to 30 (MIVL…LTLG), 66 to 86 (IFAL…PWAV), and 91 to 111 (LGLF…VGLA).

It belongs to the complex I subunit 3 family. As to quaternary structure, NDH-1 is composed of 14 different subunits. Subunits NuoA, H, J, K, L, M, N constitute the membrane sector of the complex.

It is found in the cell membrane. The enzyme catalyses a quinone + NADH + 5 H(+)(in) = a quinol + NAD(+) + 4 H(+)(out). Functionally, NDH-1 shuttles electrons from NADH, via FMN and iron-sulfur (Fe-S) centers, to quinones in the respiratory chain. The immediate electron acceptor for the enzyme in this species is believed to be a menaquinone. Couples the redox reaction to proton translocation (for every two electrons transferred, four hydrogen ions are translocated across the cytoplasmic membrane), and thus conserves the redox energy in a proton gradient. The protein is NADH-quinone oxidoreductase subunit A of Bacillus mycoides (strain KBAB4) (Bacillus weihenstephanensis).